Reading from the N-terminus, the 851-residue chain is Transcriptional regulator RFX1 (851 aa).

Polar residues-rich tracts occupy residues 1 to 11 (MSSDQTPQNRN) and 20 to 34 (PRLQ…STGP). 3 disordered regions span residues 1–121 (MSSD…EPHP), 134–170 (QSQF…PQTY), and 195–230 (HEAS…TGEN). The span at 38–53 (QQRERSQEQESDHEHQ) shows a compositional bias: basic and acidic residues. Residues 54–84 (QAQQHLHQFQQSNLTPSTTAFPSSTSIPTFS) show a composition bias toward low complexity. Over residues 85 to 114 (KQDQGYHNQFSSPQSSYRKIGNFAQSSNAP) the composition is skewed to polar residues. Residues 141–170 (YSSPYIGQSQSQSQSQSQAQPQPHPQPQTY) are compositionally biased toward low complexity. The segment covering 199–211 (SADNDSATNITTP) has biased composition (polar residues). Positions 282-357 (GMVWLLNSCD…YHYCGIKLTG (76 aa)) form a DNA-binding region, RFX-type winged-helix. Disordered stretches follow at residues 368–411 (YQQK…SVSY) and 783–806 (PPSL…TGTQ). Residues 384 to 393 (AQVGSSTSSA) show a composition bias toward polar residues. The span at 783-797 (PPSLSSLPQTQQQNP) shows a compositional bias: low complexity.

The protein belongs to the RFX family.

It localises to the nucleus. Functionally, transcription factor involved in DNA damage responses, morphogenesis, and virulence. The protein is Transcriptional regulator RFX1 (RFX1) of Candida albicans (strain SC5314 / ATCC MYA-2876) (Yeast).